The chain runs to 272 residues: Shikimate dehydrogenase (NADP(+)) (272 aa).

Shikimate is bound by residues 14–16 and Thr61; that span reads SKS. Lys65 acts as the Proton acceptor in catalysis. Glu77 lines the NADP(+) pocket. 2 residues coordinate shikimate: Asn86 and Asp102. NADP(+)-binding positions include 126–130, 149–154, and Met213; these read GAGGA and NRTVSR. Tyr215 contributes to the shikimate binding site. An NADP(+)-binding site is contributed by Gly237.

It belongs to the shikimate dehydrogenase family. In terms of assembly, homodimer.

It catalyses the reaction shikimate + NADP(+) = 3-dehydroshikimate + NADPH + H(+). Its pathway is metabolic intermediate biosynthesis; chorismate biosynthesis; chorismate from D-erythrose 4-phosphate and phosphoenolpyruvate: step 4/7. Its function is as follows. Involved in the biosynthesis of the chorismate, which leads to the biosynthesis of aromatic amino acids. Catalyzes the reversible NADPH linked reduction of 3-dehydroshikimate (DHSA) to yield shikimate (SA). The chain is Shikimate dehydrogenase (NADP(+)) from Escherichia coli O6:K15:H31 (strain 536 / UPEC).